We begin with the raw amino-acid sequence, 143 residues long: Large ribosomal subunit protein uL15 (143 aa).

A disordered region spans residues 1 to 51 (MELNGIKPAAGAKHAKRRVGRGIGSGIGKTAGRGHKGQKSRAGGFHKVGFE). Residues 21–31 (RGIGSGIGKTA) show a composition bias toward gly residues.

This sequence belongs to the universal ribosomal protein uL15 family. In terms of assembly, part of the 50S ribosomal subunit.

Functionally, binds to the 23S rRNA. The sequence is that of Large ribosomal subunit protein uL15 from Variovorax paradoxus (strain S110).